The following is a 246-amino-acid chain: Cell division protein ZapD (246 aa).

It belongs to the ZapD family. As to quaternary structure, interacts with FtsZ.

The protein localises to the cytoplasm. Cell division factor that enhances FtsZ-ring assembly. Directly interacts with FtsZ and promotes bundling of FtsZ protofilaments, with a reduction in FtsZ GTPase activity. The sequence is that of Cell division protein ZapD from Vibrio cholerae serotype O1 (strain ATCC 39541 / Classical Ogawa 395 / O395).